The following is a 545-amino-acid chain: Lysine--tRNA ligase (545 aa).

The 'HIGH' region signature appears at 42–50 (PSGVPHIGH). A 'KMSKS' region motif is present at residues 307–311 (PLSSS).

The protein belongs to the class-I aminoacyl-tRNA synthetase family.

The protein localises to the cytoplasm. It catalyses the reaction tRNA(Lys) + L-lysine + ATP = L-lysyl-tRNA(Lys) + AMP + diphosphate. This chain is Lysine--tRNA ligase, found in Haloarcula marismortui (strain ATCC 43049 / DSM 3752 / JCM 8966 / VKM B-1809) (Halobacterium marismortui).